Reading from the N-terminus, the 75-residue chain is MSKRQSFYQFLMTERNPDSTDEIAQFANNAFYDQSFPKQADDYDSLSQYLELNGTYLPSMVIFDNAWTKYEEFMS.

The protein belongs to the UPF0346 family.

The polypeptide is UPF0346 protein LSL_0716 (Ligilactobacillus salivarius (strain UCC118) (Lactobacillus salivarius)).